Here is a 151-residue protein sequence, read N- to C-terminus: Macrodomain Ter protein (151 aa).

Belongs to the MatP family. As to quaternary structure, homodimer.

The protein localises to the cytoplasm. Its function is as follows. Required for spatial organization of the terminus region of the chromosome (Ter macrodomain) during the cell cycle. Prevents early segregation of duplicated Ter macrodomains during cell division. Binds specifically to matS, which is a 13 bp signature motif repeated within the Ter macrodomain. In Photorhabdus laumondii subsp. laumondii (strain DSM 15139 / CIP 105565 / TT01) (Photorhabdus luminescens subsp. laumondii), this protein is Macrodomain Ter protein.